Here is a 193-residue protein sequence, read N- to C-terminus: MESLRQKVKEDGVVIDEKILKVDGFLNHQIDAKLMHEVGKTFYEQFKDKGVTKILTIEASGIAPAIMASLHFDVPCLFAKKAKPSTLKDGFYSTDIHSFTKNKTSTVIVSEEFLNENDTVLIIDDFLANGDASLGLYDIAQQAKAKTVGIGIVVEKSFQDGRQRLEEAGLNVSSLCKVASLKGNQVTLLGENE.

The xanthine site is built by leucine 20 and asparagine 27. 5-phospho-alpha-D-ribose 1-diphosphate is bound at residue 128 to 132 (ANGDA). Lysine 156 contacts xanthine.

The protein belongs to the purine/pyrimidine phosphoribosyltransferase family. Xpt subfamily. In terms of assembly, homodimer.

It localises to the cytoplasm. The catalysed reaction is XMP + diphosphate = xanthine + 5-phospho-alpha-D-ribose 1-diphosphate. Its pathway is purine metabolism; XMP biosynthesis via salvage pathway; XMP from xanthine: step 1/1. In terms of biological role, converts the preformed base xanthine, a product of nucleic acid breakdown, to xanthosine 5'-monophosphate (XMP), so it can be reused for RNA or DNA synthesis. The protein is Xanthine phosphoribosyltransferase of Staphylococcus haemolyticus (strain JCSC1435).